Here is an 87-residue protein sequence, read N- to C-terminus: MANIKQQIKRNKTNEKRRLKNVSFKSSVKTAIKKLNKAIENKNKSEALLLLNLSYKKLDKGISKKVYSKNFVSRHKSNLSKLVNNIN.

The disordered stretch occupies residues 1–21 (MANIKQQIKRNKTNEKRRLKN). Residues 7-20 (QIKRNKTNEKRRLK) are compositionally biased toward basic residues.

It belongs to the bacterial ribosomal protein bS20 family.

Functionally, binds directly to 16S ribosomal RNA. The sequence is that of Small ribosomal subunit protein bS20 from Phytoplasma mali (strain AT).